A 590-amino-acid polypeptide reads, in one-letter code: Phosphate-repressible phosphate permease pho-4 (590 aa).

Transmembrane regions (helical) follow at residues 6 to 26, 44 to 64, 85 to 105, 118 to 138, 149 to 169, 186 to 206, 220 to 240, and 246 to 266; these read FDYLLAIGTIFAALDAWNIGA, YLQAMILGSIMEFAGSVGVGA, ALLMLGMVCAVVASSIYLTMA, IMGGVIGMGIAAVGADGVQWV, VFLAWVIAPGLAGAFASIIFL, FVMVPIYFGITAALLCMLLLW, IAGTIIGVGAAWALLVTIFLM, and IVILEDWQLRFWHIPLGPLLL. Over 267-466 the chain is Cytoplasmic; the sequence is RRGEVPPPPA…GALPEKGKAD (200 aa). The disordered stretch occupies residues 297-361; the sequence is ARRAAQNGDS…PQIKTMVGPR (65 aa). Positions 313–322 are enriched in polar residues; that stretch reads VTSSTSNPSA. Basic and acidic residues predominate over residues 325–345; that stretch reads DGEKGATITKDDSSYSHDHSE. The next 4 helical transmembrane spans lie at 467–487, 506–525, 527–547, and 561–581; these read VPVWILVFGASCLVIGLWTYG, GFSMELGSAVTVILATRLKL, VSTTQCITGATVGVGLCSGTW, and GWFITLPVAGIISGCLMGIII.

This sequence belongs to the inorganic phosphate transporter (PiT) (TC 2.A.20) family.

It localises to the cell membrane. Phosphate transport activity is competitively inhibited by vanadate and arsenate. High-affinity transporter for external inorganic phosphate. Acts probably as a sodium-phosphate symporter. Component of the high affinity phosphate transport system II (ptsII) necessary for scavenging phosphorus from the environment under conditions of limiting phosphorus. This chain is Phosphate-repressible phosphate permease pho-4, found in Neurospora crassa (strain ATCC 24698 / 74-OR23-1A / CBS 708.71 / DSM 1257 / FGSC 987).